A 445-amino-acid chain; its full sequence is Canavalin (445 aa).

An N-terminal signal peptide occupies residues 1 to 26 (MAFSARFPLWLLLGVVLLASVSASFA). 2 Cupin type-1 domains span residues 49–207 (YLFR…DEIE) and 249–407 (FNLR…EEVE).

The protein belongs to the 7S seed storage protein family. As to quaternary structure, homotrimer.

In terms of biological role, seed storage protein. The chain is Canavalin from Canavalia gladiata (Sword bean).